The chain runs to 659 residues: Forkhead box protein P1-B (659 aa).

Composition is skewed to polar residues over residues Met-1–Gln-16 and Lys-32–Thr-41. 2 disordered regions span residues Met-1–Thr-41 and Glu-229–Tyr-263. The segment at Gly-289 to His-314 adopts a C2H2-type zinc-finger fold. Residues Val-331–Leu-352 are leucine-zipper. The interval Pro-365–Val-369 is CTBP1-binding. The tract at residues Pro-379–Leu-413 is disordered. A compositionally biased stretch (low complexity) spans Leu-387–Thr-404. The fork-head DNA-binding region spans Arg-448–Leu-538. The tract at residues Gly-590–Leu-659 is disordered. Residues Gly-595 to Gly-605 are compositionally biased toward polar residues. The span at Pro-641–Leu-659 shows a compositional bias: basic and acidic residues.

Shows complex and dynamic expression during early embryonic development. Prominent in many regions of the developing central nervous system, particularly in midbrain-hindbrain boundary, hindbrain and spinal cord. Strongly expressed in the retina, ear, branchial arches, hatching gland, heart, pronephric duct, gut, proctodeum, pectoral fin and swim bladder.

Its subcellular location is the nucleus. Functionally, transcriptional repressor. The sequence is that of Forkhead box protein P1-B (foxp1b) from Danio rerio (Zebrafish).